We begin with the raw amino-acid sequence, 415 residues long: MPETPITMPAWLQRGMVDLFPSGQWGDADQQLATRLDEAREQNRPLRVKLGIDPTGRDIHLGHSILFRKLRAFQDAGHTAVLIIGDFTARIGDPTGKSSTRVQLTSEQIEANATTYLAQLGQGQSAEKALLDFTTPGRLEVRRNTEWLADLDLPEVIGLLGTATVGQMLAKEDFGNRYGSGVPIALHEFLYPLLQGYDSVAVQADVELGGTDQKFNVAMGRDLQRHFDQRPQFGLLLPILAGLDGVQKMSKSLSNTVGLNEDPLSMYSKLEKVPDALVSSYVVLLTDLDPEALPVNPRERQKAMAIAVTASRHGIAAAEAAQNDAARLVSGSQDDAASVPEAFLSDVNFPAKAFYLLSAIGLCASSSEARRQIKGGAVRLDGEKITDPNLEFTDSSLLMGKVLQVGKKTFRRLTR.

The 'HIGH' region signature appears at 54–63 (PTGRDIHLGH). Positions 248–252 (KMSKS) match the 'KMSKS' region motif. Residue K251 participates in ATP binding. The 65-residue stretch at 351 to 415 (AKAFYLLSAI…GKKTFRRLTR (65 aa)) folds into the S4 RNA-binding domain.

The protein belongs to the class-I aminoacyl-tRNA synthetase family. TyrS type 2 subfamily. In terms of assembly, homodimer.

It localises to the cytoplasm. The enzyme catalyses tRNA(Tyr) + L-tyrosine + ATP = L-tyrosyl-tRNA(Tyr) + AMP + diphosphate + H(+). In terms of biological role, catalyzes the attachment of tyrosine to tRNA(Tyr) in a two-step reaction: tyrosine is first activated by ATP to form Tyr-AMP and then transferred to the acceptor end of tRNA(Tyr). This is Tyrosine--tRNA ligase from Prochlorococcus marinus (strain MIT 9313).